A 202-amino-acid chain; its full sequence is NAD(P)H-quinone oxidoreductase chain 6 (202 aa).

5 helical membrane passes run 9–29 (VVSFGILATMLIGTALGVVLA), 32–52 (IVYSAFLLGGVFISIAGMYLL), 61–81 (AQVLVYVGAVNVLILFAIMLV), 98–118 (VLTAIVSVGLFALLSTMVLAT), and 144–164 (FLLPFELASVLLLMAMVGAII).

The protein belongs to the complex I subunit 6 family.

It localises to the membrane. It catalyses the reaction a plastoquinone + NADH + (n+1) H(+)(in) = a plastoquinol + NAD(+) + n H(+)(out). It carries out the reaction a plastoquinone + NADPH + (n+1) H(+)(in) = a plastoquinol + NADP(+) + n H(+)(out). NDH-1 shuttles electrons from NAD(P)H, via FMN and iron-sulfur (Fe-S) centers, to quinones in the respiratory chain. The immediate electron acceptor for the enzyme in this species is believed to be plastoquinone. Couples the redox reaction to proton translocation (for every two electrons transferred, four hydrogen ions are translocated across the cytoplasmic membrane), and thus conserves the redox energy in a proton gradient. This chain is NAD(P)H-quinone oxidoreductase chain 6 (ndhG), found in Nostoc sp. (strain PCC 7120 / SAG 25.82 / UTEX 2576).